Here is a 166-residue protein sequence, read N- to C-terminus: Interferon gamma (166 aa).

The signal sequence occupies residues 1–23 (MKYTSYILAFQLCVVLGSLGCYC). Gln-24 is modified (pyrrolidone carboxylic acid). 3 N-linked (GlcNAc...) asparagine glycosylation sites follow: Asn-48, Asn-86, and Asn-120.

This sequence belongs to the type II (or gamma) interferon family. Homodimer. Interacts with IFNGR1 (via extracellular domain); this interaction promotes IFNGR1 dimerization. As to expression, released primarily from activated T lymphocytes.

Its subcellular location is the secreted. Functionally, type II interferon produced by immune cells such as T-cells and NK cells that plays crucial roles in antimicrobial, antiviral, and antitumor responses by activating effector immune cells and enhancing antigen presentation. Primarily signals through the JAK-STAT pathway after interaction with its receptor IFNGR1 to affect gene regulation. Upon IFNG binding, IFNGR1 intracellular domain opens out to allow association of downstream signaling components JAK2, JAK1 and STAT1, leading to STAT1 activation, nuclear translocation and transcription of IFNG-regulated genes. Many of the induced genes are transcription factors such as IRF1 that are able to further drive regulation of a next wave of transcription. Plays a role in class I antigen presentation pathway by inducing a replacement of catalytic proteasome subunits with immunoproteasome subunits. In turn, increases the quantity, quality, and repertoire of peptides for class I MHC loading. Increases the efficiency of peptide generation also by inducing the expression of activator PA28 that associates with the proteasome and alters its proteolytic cleavage preference. Up-regulates as well MHC II complexes on the cell surface by promoting expression of several key molecules such as cathepsins B/CTSB, H/CTSH, and L/CTSL. Participates in the regulation of hematopoietic stem cells during development and under homeostatic conditions by affecting their development, quiescence, and differentiation. This is Interferon gamma (IFNG) from Callithrix jacchus (White-tufted-ear marmoset).